The chain runs to 631 residues: Transcription factor dibT (631 aa).

A DNA-binding region (zn(2)-C6 fungal-type) is located at residues 11–38 (CWTCRLRRKRCDSVQPVCGSCQSLEITC). Residues 123 to 144 (SLADSSASTPSTSSGRPTTLRS) are compositionally biased toward low complexity. 2 disordered regions span residues 123–148 (SLAD…SVDR) and 469–488 (GLKD…TSAG).

Its subcellular location is the nucleus. In terms of biological role, transcription factor; part of the gene cluster that mediates the biosynthesis of pestalotiollide B which is part of dibenzodioxocinones, a novel class of inhibitors against cholesterol ester transfer protein (CEPT). Acts as the key transcription factor within the cluster and positively regulates the expression of the cluster genes and the subsequent production of dibenzodioxocinones such as pestalotiollide B, pestalotiollide C, 1',2'-dehydropenicillide, 3'-methoxy-1',2'-dehydropenicillide and 1',2'-epoxy-3',4'-didehydropenicillide. Required for the expression of most PKS genes outside of the dibenzodioxocinones cluster, (43 out of 48 defined PKS genes), and promotes pigmentation of the mycelium and conidia. The sequence is that of Transcription factor dibT from Pestalotiopsis microspora.